Here is a 256-residue protein sequence, read N- to C-terminus: C-8 sterol isomerase (256 aa).

The tract at residues 1-31 (MPPKKQSSSGGNKPSGSGSSSGRSSSGSSCR) is disordered. The span at 7 to 30 (SSSGGNKPSGSGSSSGRSSSGSSC) shows a compositional bias: low complexity. A helical transmembrane segment spans residues 40–60 (IGGWLKFFAILFALVAPIAYV).

It belongs to the ERG2 family.

It is found in the endoplasmic reticulum membrane. It participates in steroid metabolism; ergosterol biosynthesis; ergosterol from zymosterol: step 2/5. Its function is as follows. Catalyzes the reaction which results in unsaturation at C-7 in the B ring of sterols. The chain is C-8 sterol isomerase (erg-1) from Neurospora crassa (strain ATCC 24698 / 74-OR23-1A / CBS 708.71 / DSM 1257 / FGSC 987).